The primary structure comprises 296 residues: 4-hydroxybenzoate octaprenyltransferase (296 aa).

8 consecutive transmembrane segments (helical) span residues 23–43 (IGILLLLWPTLWGIWLASPGW), 46–66 (GLVLFVFIAGTVLMRSAGCVM), 99–119 (LALALSLVAFILVLQLNPLVV), 141–161 (IPQAYLGIAFGFGIPMAFAAI), 163–183 (GQLPLEAWILLLANVFWAIAY), 211–231 (DVFAVMACYGAFLILMAWVGV), 237–257 (WPYFAGLGVAALVALYHYALI), and 265–285 (CFKAFLHNNWLGAAIFVGVLA).

This sequence belongs to the UbiA prenyltransferase family. Mg(2+) is required as a cofactor.

It localises to the cell inner membrane. The enzyme catalyses all-trans-octaprenyl diphosphate + 4-hydroxybenzoate = 4-hydroxy-3-(all-trans-octaprenyl)benzoate + diphosphate. Its pathway is cofactor biosynthesis; ubiquinone biosynthesis. Catalyzes the prenylation of para-hydroxybenzoate (PHB) with an all-trans polyprenyl group. Mediates the second step in the final reaction sequence of ubiquinone-8 (UQ-8) biosynthesis, which is the condensation of the polyisoprenoid side chain with PHB, generating the first membrane-bound Q intermediate 3-octaprenyl-4-hydroxybenzoate. In Methylobacillus flagellatus (strain ATCC 51484 / DSM 6875 / VKM B-1610 / KT), this protein is 4-hydroxybenzoate octaprenyltransferase.